An 82-amino-acid polypeptide reads, in one-letter code: ATP synthase subunit c (82 aa).

Transmembrane regions (helical) follow at residues 7 to 27 (LVALACGIIIGLGAIGACIGI) and 53 to 73 (FLLAGLIDAAFLIGVGIAMLF).

This sequence belongs to the ATPase C chain family. F-type ATPases have 2 components, F(1) - the catalytic core - and F(0) - the membrane proton channel. F(1) has five subunits: alpha(3), beta(3), gamma(1), delta(1), epsilon(1). F(0) has three main subunits: a(1), b(2) and c(10-14). The alpha and beta chains form an alternating ring which encloses part of the gamma chain. F(1) is attached to F(0) by a central stalk formed by the gamma and epsilon chains, while a peripheral stalk is formed by the delta and b chains.

The protein resides in the cell inner membrane. F(1)F(0) ATP synthase produces ATP from ADP in the presence of a proton or sodium gradient. F-type ATPases consist of two structural domains, F(1) containing the extramembraneous catalytic core and F(0) containing the membrane proton channel, linked together by a central stalk and a peripheral stalk. During catalysis, ATP synthesis in the catalytic domain of F(1) is coupled via a rotary mechanism of the central stalk subunits to proton translocation. Functionally, key component of the F(0) channel; it plays a direct role in translocation across the membrane. A homomeric c-ring of between 10-14 subunits forms the central stalk rotor element with the F(1) delta and epsilon subunits. This is ATP synthase subunit c from Leptothrix cholodnii (strain ATCC 51168 / LMG 8142 / SP-6) (Leptothrix discophora (strain SP-6)).